The primary structure comprises 147 residues: Small ribosomal subunit protein eS19 (147 aa).

It belongs to the eukaryotic ribosomal protein eS19 family. As to quaternary structure, component of the small ribosomal subunit.

The protein localises to the cytoplasm. Its subcellular location is the nucleus. Functionally, component of the small ribosomal subunit. The ribosome is a large ribonucleoprotein complex responsible for the synthesis of proteins in the cell. Required for pre-rRNA processing and maturation of 40S ribosomal subunits. This chain is Small ribosomal subunit protein eS19 (rps19), found in Gillichthys mirabilis (Long-jawed mudsucker).